A 490-amino-acid polypeptide reads, in one-letter code: Betaine aldehyde dehydrogenase (490 aa).

Residues threonine 26, isoleucine 27, and aspartate 93 each contribute to the K(+) site. 150–152 is a binding site for NAD(+); it reads GAW. Lysine 162 (charge relay system) is an active-site residue. NAD(+) is bound at residue 176 to 179; it reads KPSE. Residue valine 180 participates in K(+) binding. 230 to 233 contacts NAD(+); that stretch reads GVAS. Leucine 246 lines the K(+) pocket. The active-site Proton acceptor is the glutamate 252. Glycine 254, cysteine 286, and glutamate 387 together coordinate NAD(+). The Nucleophile role is filled by cysteine 286. A Cysteine sulfenic acid (-SOH) modification is found at cysteine 286. Residues lysine 457 and glycine 460 each contribute to the K(+) site. The active-site Charge relay system is glutamate 464.

Belongs to the aldehyde dehydrogenase family. In terms of assembly, dimer of dimers. K(+) serves as cofactor.

The catalysed reaction is betaine aldehyde + NAD(+) + H2O = glycine betaine + NADH + 2 H(+). The protein operates within amine and polyamine biosynthesis; betaine biosynthesis via choline pathway; betaine from betaine aldehyde: step 1/1. Involved in the biosynthesis of the osmoprotectant glycine betaine. Catalyzes the irreversible oxidation of betaine aldehyde to the corresponding acid. The polypeptide is Betaine aldehyde dehydrogenase (Escherichia coli O7:K1 (strain IAI39 / ExPEC)).